The sequence spans 125 residues: Alpha-endosulfine (125 aa).

Residues 1-37 (MSDKYIGDSHLEETGEEKQDSQEKEAVTPEKAEEQKL) are compositionally biased toward basic and acidic residues. The segment at 1 to 52 (MSDKYIGDSHLEETGEEKQDSQEKEAVTPEKAEEQKLKAKYPNLGQKPGGSD) is disordered. A Phosphothreonine; by CDK2 modification is found at T28. Position 67 is a phosphoserine; by GWL (S67). The disordered stretch occupies residues 86 to 107 (GPDKNLVTGDHIPTPQDLPQRK). The residue at position 99 (T99) is a Phosphothreonine; by CDK2. S109 is modified (phosphoserine; by PKA).

Belongs to the endosulfine family. In terms of assembly, interacts (when phosphorylated at Ser-67) with ppp2r2d. In terms of processing, phosphorylation at Ser-67 by gwl during mitosis is essential for interaction with PPP2R2D (PR55-delta) and subsequent inactivation of PP2A. Phosphorylated by PKA.

Its subcellular location is the cytoplasm. In terms of biological role, protein phosphatase inhibitor that specifically inhibits protein phosphatase 2A (PP2A) during mitosis. When phosphorylated at Ser-67 during mitosis, specifically interacts with ppp2r2d (PR55-delta) and inhibits its activity, leading to inactivation of PP2A, an essential condition to keep cyclin-B1-CDK1 activity high during M phase. The chain is Alpha-endosulfine (ensa) from Xenopus laevis (African clawed frog).